Here is a 161-residue protein sequence, read N- to C-terminus: Large ribosomal subunit protein uL16 (161 aa).

The segment at 140–161 is disordered; the sequence is LNKGNYKPAKTPVTADDSESSS.

Belongs to the universal ribosomal protein uL16 family. As to quaternary structure, part of the 50S ribosomal subunit.

Its function is as follows. Binds 23S rRNA and is also seen to make contacts with the A and possibly P site tRNAs. The protein is Large ribosomal subunit protein uL16 of Prochlorococcus marinus (strain NATL2A).